A 339-amino-acid chain; its full sequence is MTQAQTAAVQPAAIPVAAPASQRWRVADVVALFELPFNDLMFRAQQVHREHFDANAVQLSTLLSIKTGGCEEDCGYCSQSSHHDTGLKAEKLMDVDTVLDAARAAKANGASRFCMGAAWRNPKERHMPALTEMVRGVKELGLETCMTLGMLEDEQAQQLADAGLDYYNHNLDTSPEFYGQVISTRTYQDRLDTLDRVRDAGINVCCGGIIGMGESRRERAGLISQLANLNPYPESVPINNLVAIEGTPLEGTAPLDPFEFVRTIAVARITMPKAVVRLSAGREQLDDAMQAMCFLAGANSMFYGDQLLTTSNPQTQRDRALFERLGIRASQADALSDNA.

Residues 55 to 282 form the Radical SAM core domain; that stretch reads NAVQLSTLLS…KAVVRLSAGR (228 aa). Residues cysteine 70, cysteine 74, and cysteine 77 each coordinate [4Fe-4S] cluster. Residues cysteine 114, cysteine 145, cysteine 205, and arginine 277 each coordinate [2Fe-2S] cluster.

This sequence belongs to the radical SAM superfamily. Biotin synthase family. As to quaternary structure, homodimer. [4Fe-4S] cluster is required as a cofactor. [2Fe-2S] cluster serves as cofactor.

The enzyme catalyses (4R,5S)-dethiobiotin + (sulfur carrier)-SH + 2 reduced [2Fe-2S]-[ferredoxin] + 2 S-adenosyl-L-methionine = (sulfur carrier)-H + biotin + 2 5'-deoxyadenosine + 2 L-methionine + 2 oxidized [2Fe-2S]-[ferredoxin]. The protein operates within cofactor biosynthesis; biotin biosynthesis; biotin from 7,8-diaminononanoate: step 2/2. Its function is as follows. Catalyzes the conversion of dethiobiotin (DTB) to biotin by the insertion of a sulfur atom into dethiobiotin via a radical-based mechanism. In Burkholderia orbicola (strain MC0-3), this protein is Biotin synthase.